Consider the following 439-residue polypeptide: Xylose isomerase (439 aa).

Residues His101 and Asp104 contribute to the active site. Glu232, Glu268, His271, Asp296, Asp307, Asp309, and Asp339 together coordinate Mg(2+).

The protein belongs to the xylose isomerase family. As to quaternary structure, homotetramer. Requires Mg(2+) as cofactor.

Its subcellular location is the cytoplasm. It carries out the reaction alpha-D-xylose = alpha-D-xylulofuranose. This Yersinia enterocolitica serotype O:8 / biotype 1B (strain NCTC 13174 / 8081) protein is Xylose isomerase.